We begin with the raw amino-acid sequence, 141 residues long: Small ribosomal subunit protein eS12 (141 aa).

It belongs to the eukaryotic ribosomal protein eS12 family. As to quaternary structure, component of the small ribosomal subunit. Mature ribosomes consist of a small (40S) and a large (60S) subunit. The 40S subunit contains about 32 different proteins and 1 molecule of RNA (18S). The 60S subunit contains about 42 different proteins and 3 molecules of RNA (28S, 5.8S and 5S).

Its subcellular location is the cytoplasm. In terms of biological role, component of the ribosome, a large ribonucleoprotein complex responsible for the synthesis of proteins in the cell. The small ribosomal subunit (SSU) binds messenger RNAs (mRNAs) and translates the encoded message by selecting cognate aminoacyl-transfer RNA (tRNA) molecules. The large subunit (LSU) contains the ribosomal catalytic site termed the peptidyl transferase center (PTC), which catalyzes the formation of peptide bonds, thereby polymerizing the amino acids delivered by tRNAs into a polypeptide chain. The nascent polypeptides leave the ribosome through a tunnel in the LSU and interact with protein factors that function in enzymatic processing, targeting, and the membrane insertion of nascent chains at the exit of the ribosomal tunnel. The polypeptide is Small ribosomal subunit protein eS12 (Plasmodium falciparum (isolate 3D7)).